A 137-amino-acid chain; its full sequence is Large ribosomal subunit protein bL17 (137 aa).

Belongs to the bacterial ribosomal protein bL17 family. As to quaternary structure, part of the 50S ribosomal subunit. Contacts protein L32.

The chain is Large ribosomal subunit protein bL17 from Bradyrhizobium sp. (strain BTAi1 / ATCC BAA-1182).